We begin with the raw amino-acid sequence, 239 residues long: tRNA (guanine-N(7)-)-methyltransferase (239 aa).

S-adenosyl-L-methionine contacts are provided by Glu69, Glu94, Asp121, and Asp144. The active site involves Asp144. Lys148 contacts substrate. An interaction with RNA region spans residues Arg150 to Arg155. Substrate contacts are provided by residues Asp180 and Thr217 to Glu220.

The protein belongs to the class I-like SAM-binding methyltransferase superfamily. TrmB family. Monomer.

The catalysed reaction is guanosine(46) in tRNA + S-adenosyl-L-methionine = N(7)-methylguanosine(46) in tRNA + S-adenosyl-L-homocysteine. It participates in tRNA modification; N(7)-methylguanine-tRNA biosynthesis. Functionally, catalyzes the formation of N(7)-methylguanine at position 46 (m7G46) in tRNA. The sequence is that of tRNA (guanine-N(7)-)-methyltransferase from Salmonella typhi.